The sequence spans 436 residues: Probable transporter MCH1 (436 aa).

7 consecutive transmembrane segments (helical) span residues 27–47 (VVAF…LLFT), 66–86 (MISS…GYLA), 93–113 (LLSL…SYLV), 119–139 (SVIG…SLYF), 155–175 (LAIS…AQIL), 188–208 (LEVV…ASFV), and 249–269 (FVSF…ILNI). The N-linked (GlcNAc...) asparagine glycan is linked to Asn278. The next 5 helical transmembrane spans lie at 295-312 (VSIM…LGVL), 325-345 (LLVV…SAIL), 347-367 (GVSY…IWGI), 373-393 (TWGS…MFYG), and 410-430 (TAGA…IWYA).

Belongs to the major facilitator superfamily.

It is found in the vacuole membrane. Probable transporter. The sequence is that of Probable transporter MCH1 (MCH1) from Candida albicans (strain SC5314 / ATCC MYA-2876) (Yeast).